The chain runs to 1916 residues: Endoribonuclease Dicer (1916 aa).

One can recognise a Helicase ATP-binding domain in the interval 51 to 227 (LLEAALDHNT…ELEEKIQKLE (177 aa)). 64–71 (LNTGSGKT) is a binding site for ATP. The DECH box motif lies at 175–178 (DECH). The interval 256 to 595 (DCGPFTDRSG…LRNKCSKSAD (340 aa)) is required for interaction with PRKRA and TARBP2. Residues 409-433 (YVSWSDSEDDDDDEEIEEKEKPETN) are disordered. A phosphoserine mark is found at Ser-413 and Ser-415. The span at 414-425 (DSEDDDDDEEIE) shows a compositional bias: acidic residues. The Helicase C-terminal domain maps to 433 to 602 (NFPSPFTNIL…SADGAEADVH (170 aa)). Positions 630–722 (AIGHINRYCA…MPVGKETVKY (93 aa)) constitute a Dicer dsRNA-binding fold domain. A disordered region spans residues 726–745 (LDLHDEEETSVPGRPGSTKR). Positions 895–1042 (KFMEDIEKSE…LVPELCAIHP (148 aa)) constitute a PAZ domain. Ser-1016 and Ser-1160 each carry phosphoserine. Residues 1276–1403 (DSEQSPSVGY…SEKWEKDEMT (128 aa)) enclose the RNase III 1 domain. Positions 1316, 1395, and 1398 each coordinate Mg(2+). Phosphoserine is present on residues Ser-1456, Ser-1464, and Ser-1466. The segment at 1598-1626 (ALDPAQENGSSQQKSLSGSCAAPVGPRSS) is disordered. The segment covering 1604 to 1615 (ENGSSQQKSLSG) has biased composition (polar residues). Residues 1660-1818 (FETFEKKINY…LAGAIYMDSG (159 aa)) form the RNase III 2 domain. Mg(2+) is bound by residues Glu-1699, Asp-1804, and Glu-1807. The DRBM domain occupies 1843-1908 (VPRSPVRELL…ARRALRSLKA (66 aa)). The residue at position 1862 (Ser-1862) is a Phosphoserine.

Belongs to the helicase family. Dicer subfamily. As to quaternary structure, component of the RISC loading complex (RLC), or micro-RNA (miRNA) loading complex (miRLC), which is composed of DICER1, AGO2 and TARBP2; DICER1 and TARBP2 are required to process precursor miRNAs (pre-miRNAs) to mature miRNAs and then load them onto AGO2. Note that the trimeric RLC/miRLC is also referred to as RISC. Interacts with DHX9, AGO1, PIWIL1 and PRKRA. Interacts with AGO2, TARBP2, EIF6, MOV10 and RPL7A (60S ribosome subunit); they form a large RNA-induced silencing complex (RISC). Interacts with BCDIN3D. Interacts (via Dicer dsRNA-binding fold domain) with ALOX5 (via PLAT domain); this interaction enhances arachidonate 5-lipoxygenase activity and modifies the miRNA precursor processing activity of DICER1. Requires Mg(2+) as cofactor. It depends on Mn(2+) as a cofactor. Isoform 1 is expressed in a wide variety of tissues. Isoform 2 is specifically expressed in oocytes during their growth (at protein level).

The protein resides in the cytoplasm. It carries out the reaction Endonucleolytic cleavage to 5'-phosphomonoester.. Double-stranded RNA (dsRNA) endoribonuclease playing a central role in short dsRNA-mediated post-transcriptional gene silencing. Cleaves naturally occurring long dsRNAs and short hairpin pre-microRNAs (miRNA) into fragments of twenty-one to twenty-three nucleotides with 3' overhang of two nucleotides, producing respectively short interfering RNAs (siRNA) and mature microRNAs. SiRNAs and miRNAs serve as guide to direct the RNA-induced silencing complex (RISC) to complementary RNAs to degrade them or prevent their translation. Gene silencing mediated by siRNAs, also called RNA interference, controls the elimination of transcripts from mobile and repetitive DNA elements of the genome but also the degradation of exogenous RNA of viral origin for instance. The miRNA pathway on the other side is a mean to specifically regulate the expression of target genes. Functionally, more active than isoform 1 to process long double-stranded RNA into siRNAs. Responsible for the accumulation of endogenous siRNAs observed in mouse oocytes compared to somatic cells and it regulates meiotic spindle organization in female germline. In Mus musculus (Mouse), this protein is Endoribonuclease Dicer (Dicer1).